We begin with the raw amino-acid sequence, 285 residues long: Probable nudix hydrolase C6G9.05 (285 aa).

The Nudix hydrolase domain maps to 114–254; that stretch reads TRFASVLMPL…DLLYVEFNID (141 aa). A Nudix box motif is present at residues 153–175; that stretch reads GRVEPSDGSHYYAALRETYEEIG. The Mg(2+) site is built by Glu169 and Glu173.

Belongs to the Nudix hydrolase family. PCD1 subfamily. Mn(2+) is required as a cofactor. It depends on Mg(2+) as a cofactor.

Its function is as follows. Probably mediates the hydrolysis of some nucleoside diphosphate derivatives. In Schizosaccharomyces pombe (strain 972 / ATCC 24843) (Fission yeast), this protein is Probable nudix hydrolase C6G9.05.